We begin with the raw amino-acid sequence, 348 residues long: MTDPSRLVTPERRGDDLGDAALRPQNLSEFVGQEKARANLQVFIDAARKRKEALDHVLFVGPPGLGKTTLAQIVARELGVGFRATSGPVIAKAGDLAALLTNLEERDVLFIDEIHRLSPAVEEVLYPAMEDFQLDLIIGEGPAARSVKIELSKFTLVGATTRAGLLTNPLRDRFGIPVRLNFYTIEELESIVSRGARVLGTGITADGANEIARRARGTPRIAGRLLRRVRDFASAADAEAIDRKIADHALGALEVDAAGLDAMDRRYLSTIALNYGGGPVGVETMAAALSEPRDAIEDIIEPYLIQCGYLQRTPRGRLLTPHAFKHLGLAEPSREPGQFGLFGGEEEA.

A large ATPase domain (RuvB-L) region spans residues 1 to 183 (MTDPSRLVTP…FGIPVRLNFY (183 aa)). ATP is bound by residues L22, R23, G64, K67, T68, T69, 130–132 (EDF), R173, Y183, and R220. T68 serves as a coordination point for Mg(2+). The segment at 184–254 (TIEELESIVS…IADHALGALE (71 aa)) is small ATPAse domain (RuvB-S). Positions 257-348 (AAGLDAMDRR…FGLFGGEEEA (92 aa)) are head domain (RuvB-H). Positions 293, 312, and 317 each coordinate DNA.

The protein belongs to the RuvB family. As to quaternary structure, homohexamer. Forms an RuvA(8)-RuvB(12)-Holliday junction (HJ) complex. HJ DNA is sandwiched between 2 RuvA tetramers; dsDNA enters through RuvA and exits via RuvB. An RuvB hexamer assembles on each DNA strand where it exits the tetramer. Each RuvB hexamer is contacted by two RuvA subunits (via domain III) on 2 adjacent RuvB subunits; this complex drives branch migration. In the full resolvosome a probable DNA-RuvA(4)-RuvB(12)-RuvC(2) complex forms which resolves the HJ.

Its subcellular location is the cytoplasm. It carries out the reaction ATP + H2O = ADP + phosphate + H(+). Functionally, the RuvA-RuvB-RuvC complex processes Holliday junction (HJ) DNA during genetic recombination and DNA repair, while the RuvA-RuvB complex plays an important role in the rescue of blocked DNA replication forks via replication fork reversal (RFR). RuvA specifically binds to HJ cruciform DNA, conferring on it an open structure. The RuvB hexamer acts as an ATP-dependent pump, pulling dsDNA into and through the RuvAB complex. RuvB forms 2 homohexamers on either side of HJ DNA bound by 1 or 2 RuvA tetramers; 4 subunits per hexamer contact DNA at a time. Coordinated motions by a converter formed by DNA-disengaged RuvB subunits stimulates ATP hydrolysis and nucleotide exchange. Immobilization of the converter enables RuvB to convert the ATP-contained energy into a lever motion, pulling 2 nucleotides of DNA out of the RuvA tetramer per ATP hydrolyzed, thus driving DNA branch migration. The RuvB motors rotate together with the DNA substrate, which together with the progressing nucleotide cycle form the mechanistic basis for DNA recombination by continuous HJ branch migration. Branch migration allows RuvC to scan DNA until it finds its consensus sequence, where it cleaves and resolves cruciform DNA. The protein is Holliday junction branch migration complex subunit RuvB of Rhodopseudomonas palustris (strain HaA2).